The chain runs to 333 residues: Homoserine O-succinyltransferase (333 aa).

C147 acts as the Acyl-thioester intermediate in catalysis. Positions 168 and 196 each coordinate substrate. The Proton acceptor role is filled by H239. E241 is an active-site residue. Residue R253 participates in substrate binding.

The protein belongs to the MetA family.

It localises to the cytoplasm. It catalyses the reaction L-homoserine + succinyl-CoA = O-succinyl-L-homoserine + CoA. It functions in the pathway amino-acid biosynthesis; L-methionine biosynthesis via de novo pathway; O-succinyl-L-homoserine from L-homoserine: step 1/1. Functionally, transfers a succinyl group from succinyl-CoA to L-homoserine, forming succinyl-L-homoserine. In Rhodopseudomonas palustris, this protein is Homoserine O-succinyltransferase.